The primary structure comprises 499 residues: 2,3-bisphosphoglycerate-independent phosphoglycerate mutase (499 aa).

Mn(2+) contacts are provided by aspartate 10 and serine 60. Serine 60 functions as the Phosphoserine intermediate in the catalytic mechanism. Residues histidine 121, 151–152 (RD), arginine 182, arginine 188, 253–256 (RPDR), and lysine 326 contribute to the substrate site. Residues aspartate 391, histidine 395, aspartate 434, histidine 435, and histidine 452 each coordinate Mn(2+).

The protein belongs to the BPG-independent phosphoglycerate mutase family. In terms of assembly, monomer. The cofactor is Mn(2+).

It catalyses the reaction (2R)-2-phosphoglycerate = (2R)-3-phosphoglycerate. The protein operates within carbohydrate degradation; glycolysis; pyruvate from D-glyceraldehyde 3-phosphate: step 3/5. Catalyzes the interconversion of 2-phosphoglycerate and 3-phosphoglycerate. The polypeptide is 2,3-bisphosphoglycerate-independent phosphoglycerate mutase (Metamycoplasma hominis (strain ATCC 23114 / DSM 25592 / NBRC 14850 / NCTC 10111 / PG21) (Mycoplasma hominis)).